We begin with the raw amino-acid sequence, 669 residues long: MPIQVLPPQLANQIAAGEVVERPASVVKELVENSLDAGATRIDIDIERGGAKLIRIRDNGSGIGKDELTLALARHATSKIATLDDLEAIVSMGFRGEALASISSVSRLTLTSRTAEQSEAWQAYAEGRDMAVTVKPAAHPVGTTLEVLDLFYNTPARRKFMRTEKTEFTHIDEVVRRIALARFDVAITLHHNGKLIRQYRAAPDKSQYERRLGNICGATFLQHALAVSWQHGDLTIHGWVADPVGAKQLPDMQYCYVNQRMMRDRLINHAIRQAYQDQLSDDQQPAYVLYLEIDPHQVDVNVHPAKHEVRFHQARLVHDFIYQAVMSVLQQASAPGLGMTSPETGKPVQWQQENRPAAGENHFAQPPRTDNSPSYGGKTPRAGHSGQAKESAYSGYQPENPYQKKQGDLYKALLQPADGAAGASNPSGEHISVPANRVMPPEVVVLSTVSHDSPPNRTAPDATTSSSKPRAPIESPLESQSNGFGRVLTVYPPCYALLEYHKGLAMLSLSVAERHLKAVQLTPSEEGLRAQPLLIPQRLTLSKSELSVLSAHHALLARFGIDVLVESQRATLRAVPLPLRQQNLQNLISELIGYLANYQTVETQQVEPGELASWMATRLQSEQESWSHSQAIQLLADVERLCPQLAKAPPSELLYMMDIHDAIKALKHE.

Disordered regions lie at residues 354 to 402 (NRPA…ENPY) and 448 to 479 (TVSH…PLES). Over residues 448 to 468 (TVSHDSPPNRTAPDATTSSSK) the composition is skewed to polar residues.

This sequence belongs to the DNA mismatch repair MutL/HexB family.

In terms of biological role, this protein is involved in the repair of mismatches in DNA. It is required for dam-dependent methyl-directed DNA mismatch repair. May act as a 'molecular matchmaker', a protein that promotes the formation of a stable complex between two or more DNA-binding proteins in an ATP-dependent manner without itself being part of a final effector complex. This chain is DNA mismatch repair protein MutL, found in Pectobacterium carotovorum subsp. carotovorum (strain PC1).